The following is a 134-amino-acid chain: Loki profilin-2 (134 aa).

Residues 55–62 form a loki loop region; sequence LALGEKGI.

Belongs to the Asgard profilin family.

It is found in the cytoplasm. The protein localises to the cytoskeleton. With respect to regulation, inhibition of rabbit actin polymerization is reduced by phosphatidylinositol-(4,5)-P2(1,2-dipalmitoyl), a soluble form of the phospholipid phosphatidylinositol, suggesting an unknown lipid might regulate actin-profilin interaction in vivo. Functionally, binds to actin and affects the structure of the cytoskeleton. At high concentrations inhibits spontaneous rabbit actin nucleation. This strongly suggests this archaea has a profilin-regulated actin system, and actin-type genes can be identified in this organism. In Lokiarchaeum sp. (strain GC14_75), this protein is Loki profilin-2.